A 349-amino-acid chain; its full sequence is Probable tRNA pseudouridine synthase B (349 aa).

Asp41 serves as the catalytic Nucleophile. Positions 207 to 279 (YPKVIVKETA…KVIDIDNVLI (73 aa)) constitute a PUA domain. A compositionally biased stretch (basic and acidic residues) spans 300-309 (IPVQKPERKL). Residues 300–349 (IPVQKPERKLHGNLQGSQEWKDTGNRGNPKRGGTGSKGFSSGFRKRKAKR) form a disordered region.

This sequence belongs to the pseudouridine synthase TruB family. Type 2 subfamily.

The enzyme catalyses uridine(55) in tRNA = pseudouridine(55) in tRNA. Its function is as follows. Could be responsible for synthesis of pseudouridine from uracil-55 in the psi GC loop of transfer RNAs. The sequence is that of Probable tRNA pseudouridine synthase B from Picrophilus torridus (strain ATCC 700027 / DSM 9790 / JCM 10055 / NBRC 100828 / KAW 2/3).